The following is a 458-amino-acid chain: Secretion-regulating guanine nucleotide exchange factor (458 aa).

RCC1 repeat units follow at residues A15–G67, G68–N119, G120–S171, G172–A230, G231–T283, G284–G351, and V352–L402. The segment at D420 to L458 is disordered. Positions E426 to S442 are enriched in basic and acidic residues. Residue S427 is modified to Phosphoserine.

Interacts with SEC5. The interaction occurs only in the presence of magnesium or manganese and is stimulated by dCTP or GTP.

The protein localises to the cytoplasm. It is found in the nucleus. Probable guanine nucleotide exchange factor (GEF), which may be involved in the secretion process. The polypeptide is Secretion-regulating guanine nucleotide exchange factor (SERGEF) (Homo sapiens (Human)).